The primary structure comprises 563 residues: Arginine--tRNA ligase (563 aa).

A 'HIGH' region motif is present at residues 121 to 131; it reads PNIAKPFSIGH.

It belongs to the class-I aminoacyl-tRNA synthetase family. In terms of assembly, monomer.

The protein localises to the cytoplasm. The catalysed reaction is tRNA(Arg) + L-arginine + ATP = L-arginyl-tRNA(Arg) + AMP + diphosphate. The protein is Arginine--tRNA ligase of Streptococcus pyogenes serotype M18 (strain MGAS8232).